Here is a 99-residue protein sequence, read N- to C-terminus: Large ribosomal subunit protein bL21 (99 aa).

The protein belongs to the bacterial ribosomal protein bL21 family. Part of the 50S ribosomal subunit. Contacts protein L20.

In terms of biological role, this protein binds to 23S rRNA in the presence of protein L20. The chain is Large ribosomal subunit protein bL21 from Mycoplasmopsis pulmonis (strain UAB CTIP) (Mycoplasma pulmonis).